The primary structure comprises 94 residues: Neutrophil defensin 3 (94 aa).

A signal peptide spans 1-19 (MRTLAILAAILLVALQAQA). Residues 20-38 (EPLQARADEVAAAPEQIAA) constitute a propeptide that is removed on maturation. Disulfide bonds link cysteine 66/cysteine 94, cysteine 68/cysteine 83, and cysteine 73/cysteine 93.

This sequence belongs to the alpha-defensin family. As to quaternary structure, dimer. In terms of assembly, (Microbial infection) Interacts with herpes virus 1 HHV-1 envelope glycoprotein B; this interaction inhibits viral infection.

The protein localises to the secreted. In terms of biological role, effector molecule of the innate immune system that acts via antibiotic-like properties against a broad array of infectious agents including bacteria, fungi, and viruses. Possesses the ability to neutralize bacterial toxins such as B.anthracis lethal factor, Clostridium difficile cytotoxin B as well as leukocidin produced by Staphylococcus aureus. Also blocks herpes simplex virus infection by interacting with envelope glycoprotein B and thus preventing its binding to heparan sulfate, the receptor for attachment. The chain is Neutrophil defensin 3 (DEFA3) from Homo sapiens (Human).